The following is a 129-amino-acid chain: Phosphoribosyl-AMP cyclohydrolase (129 aa).

D78 contacts Mg(2+). C79 contacts Zn(2+). Mg(2+)-binding residues include D80 and D82. C96 and C103 together coordinate Zn(2+).

Belongs to the PRA-CH family. As to quaternary structure, homodimer. Mg(2+) is required as a cofactor. The cofactor is Zn(2+).

It localises to the cytoplasm. It catalyses the reaction 1-(5-phospho-beta-D-ribosyl)-5'-AMP + H2O = 1-(5-phospho-beta-D-ribosyl)-5-[(5-phospho-beta-D-ribosylamino)methylideneamino]imidazole-4-carboxamide. Its pathway is amino-acid biosynthesis; L-histidine biosynthesis; L-histidine from 5-phospho-alpha-D-ribose 1-diphosphate: step 3/9. Catalyzes the hydrolysis of the adenine ring of phosphoribosyl-AMP. In Nitrosomonas eutropha (strain DSM 101675 / C91 / Nm57), this protein is Phosphoribosyl-AMP cyclohydrolase.